A 165-amino-acid chain; its full sequence is uncharacterized protein (165 aa).

This sequence belongs to the SixA phosphatase family.

This is an uncharacterized protein from Picosynechococcus sp. (strain ATCC 27264 / PCC 7002 / PR-6) (Agmenellum quadruplicatum).